The chain runs to 249 residues: Small ribosomal subunit protein eS6 (249 aa).

K14 participates in a covalent cross-link: Glycyl lysine isopeptide (Lys-Gly) (interchain with G-Cter in SUMO2). Position 35 is an ADP-ribosyl glutamic acid (E35). (3R)-3-hydroxyarginine is present on R137. Position 148 is a phosphoserine (S148). An N6-acetyllysine modification is found at K211. Over residues 217 to 229 (MKEAKEKRQEQIA) the composition is skewed to basic and acidic residues. Residues 217 to 249 (MKEAKEKRQEQIAKRRRLSSLRASTSKSESSQK) are disordered. Phosphoserine; by RPS6KA1, RPS6KA3, DAPK1 and PASK is present on residues S235 and S236. The segment covering 236–249 (SLRASTSKSESSQK) has biased composition (low complexity). 4 positions are modified to phosphoserine: S240, S242, S244, and S247.

Belongs to the eukaryotic ribosomal protein eS6 family. As to quaternary structure, component of the small ribosomal subunit. Part of the small subunit (SSU) processome, composed of more than 70 proteins and the RNA chaperone small nucleolar RNA (snoRNA) U3. Ribosomal protein S6 is the major substrate of protein kinases in eukaryote ribosomes. The phosphorylation is stimulated by growth factors, tumor promoting agents, and mitogens. It is dephosphorylated at growth arrest. Phosphorylated at Ser-235 and Ser-236 by RPS6KA1 and RPS6KA3; phosphorylation at these sites facilitates the assembly of the pre-initiation complex. In terms of processing, specifically hydroxylated (with R stereochemistry) at C-3 of Arg-137 by KDM8. Post-translationally, mono-ADP-ribosylation at Glu-35 by PARP16 inhibits polysome assembly and mRNA loading, thereby inhibiting protein translation.

It localises to the cytoplasm. It is found in the nucleus. The protein localises to the nucleolus. In terms of biological role, component of the 40S small ribosomal subunit. Plays an important role in controlling cell growth and proliferation through the selective translation of particular classes of mRNA. Part of the small subunit (SSU) processome, first precursor of the small eukaryotic ribosomal subunit. During the assembly of the SSU processome in the nucleolus, many ribosome biogenesis factors, an RNA chaperone and ribosomal proteins associate with the nascent pre-rRNA and work in concert to generate RNA folding, modifications, rearrangements and cleavage as well as targeted degradation of pre-ribosomal RNA by the RNA exosome. This chain is Small ribosomal subunit protein eS6 (RPS6), found in Bos taurus (Bovine).